The sequence spans 141 residues: Nucleoside diphosphate kinase (141 aa).

Lys-11, Phe-59, Arg-87, Thr-93, Arg-104, and Asn-114 together coordinate ATP. Catalysis depends on His-117, which acts as the Pros-phosphohistidine intermediate.

It belongs to the NDK family. In terms of assembly, homotetramer. It depends on Mg(2+) as a cofactor.

The protein localises to the cytoplasm. It catalyses the reaction a 2'-deoxyribonucleoside 5'-diphosphate + ATP = a 2'-deoxyribonucleoside 5'-triphosphate + ADP. The catalysed reaction is a ribonucleoside 5'-diphosphate + ATP = a ribonucleoside 5'-triphosphate + ADP. Major role in the synthesis of nucleoside triphosphates other than ATP. The ATP gamma phosphate is transferred to the NDP beta phosphate via a ping-pong mechanism, using a phosphorylated active-site intermediate. The sequence is that of Nucleoside diphosphate kinase from Janthinobacterium sp. (strain Marseille) (Minibacterium massiliensis).